The primary structure comprises 619 residues: Leucine aminopeptidase 2 (619 aa).

A peptide contacts are provided by residues 141–143 (QCQ) and 273–278 (PYGGME). Zn(2+) is bound at residue His302. The active-site Proton acceptor is the Glu303. His306 and Glu325 together coordinate Zn(2+). The active-site Proton donor is the Tyr390.

Belongs to the peptidase M1 family. The cofactor is Zn(2+).

The protein resides in the cytoplasm. Its subcellular location is the nucleus. It catalyses the reaction an epoxide + H2O = an ethanediol. Its function is as follows. Aminopeptidase that preferentially cleaves di- and tripeptides. Also has low epoxide hydrolase activity (in vitro). Can hydrolyze the epoxide leukotriene LTA(4) but it forms preferentially 5,6-dihydroxy-7,9,11,14-eicosatetraenoic acid rather than the cytokine leukotriene B(4) as the product compared to the homologous mammalian enzyme (in vitro). This is Leucine aminopeptidase 2 from Coccidioides immitis (strain RS) (Valley fever fungus).